The sequence spans 473 residues: MSNKVLVKWAVILVALFASVYLLYPVYKWYSLSNEDRAKLEASGDRPKNILNLGLDLRGGSSLLLELDVTKLPDNTPAARNDAVSRAIEIIRNRIDQYGVAETPITRQGEKWISVQLPGIANPAQAEALIGKTAMLEFRIVKPQTSALDKAAAKIEDTEEPWDEDGNLIPSLAKLLPADTIVLKNKEGGFSFLEKEVKVTGADLENAQVNVGGDYGYPEVSFTFSAEGAKKFGSLTGSNIGKQLAIVLDNTVQSAPSIQSRITRDGRISGRFTMDEARRLAITLRAGALPAPVKIIEKRTIGPSLGEDSIKSGVRASLYGIVIILILMAIYYKSGGIISNIALILNLVFLLAAMAAFNATLTMPGIAGIILSLAMAIDANVLILERMREEKLRGRSLYEMIDLGYTKAWSAIFDSNFTSWIVALFLFQFGSGPVKGFAVTLTLGLLIGVFTSVFVTRAIYDLLLTANPKDISL.

6 consecutive transmembrane segments (helical) span residues 5-25, 316-336, 337-357, 364-384, 409-429, and 436-456; these read VLVK…LLYP, ASLY…KSGG, IISN…MAAF, PGIA…VLIL, WSAI…LFQF, and GFAV…VFVT.

It belongs to the SecD/SecF family. SecD subfamily. In terms of assembly, forms a complex with SecF. Part of the essential Sec protein translocation apparatus which comprises SecA, SecYEG and auxiliary proteins SecDF. Other proteins may also be involved.

Its subcellular location is the cell inner membrane. Its function is as follows. Part of the Sec protein translocase complex. Interacts with the SecYEG preprotein conducting channel. SecDF uses the proton motive force (PMF) to complete protein translocation after the ATP-dependent function of SecA. This is Protein translocase subunit SecD from Elusimicrobium minutum (strain Pei191).